We begin with the raw amino-acid sequence, 41 residues long: Large ribosomal subunit protein bL36 (41 aa).

The protein belongs to the bacterial ribosomal protein bL36 family.

The chain is Large ribosomal subunit protein bL36 from Xylella fastidiosa (strain M23).